A 68-amino-acid chain; its full sequence is Small ribosomal subunit protein bS21 (68 aa).

It belongs to the bacterial ribosomal protein bS21 family.

The protein is Small ribosomal subunit protein bS21 of Jannaschia sp. (strain CCS1).